Here is a 688-residue protein sequence, read N- to C-terminus: Translation initiation factor IF-2 (688 aa).

The tract at residues 62–103 (EFEVEEKVVRSKKNSNKKKKKGKGNEDKRQDNFAGRQQTQIV) is disordered. The span at 71-83 (RSKKNSNKKKKKG) shows a compositional bias: basic residues. Residues 190–359 (ERPAVVTIMG…LLVSEVEEYK (170 aa)) form the tr-type G domain. The tract at residues 199 to 206 (GHVDHGKT) is G1. Residue 199 to 206 (GHVDHGKT) coordinates GTP. Residues 224-228 (GITQH) form a G2 region. The interval 245-248 (DTPG) is G3. GTP-binding positions include 245 to 249 (DTPGH) and 299 to 302 (NKMD). The tract at residues 299 to 302 (NKMD) is G4. The G5 stretch occupies residues 335–337 (SAI).

Belongs to the TRAFAC class translation factor GTPase superfamily. Classic translation factor GTPase family. IF-2 subfamily.

The protein resides in the cytoplasm. Functionally, one of the essential components for the initiation of protein synthesis. Protects formylmethionyl-tRNA from spontaneous hydrolysis and promotes its binding to the 30S ribosomal subunits. Also involved in the hydrolysis of GTP during the formation of the 70S ribosomal complex. This is Translation initiation factor IF-2 from Bacillus cereus (strain G9842).